A 529-amino-acid polypeptide reads, in one-letter code: Potassium voltage-gated channel subfamily A member 6 (529 aa).

The interval 1 to 35 is disordered; it reads MRSEKSLTLAAPGEVRGPEGEQQDAGEFQEAEGGG. Topologically, residues 1–171 are cytoplasmic; the sequence is MRSEKSLTLA…LLFEYPESSG (171 aa). Serine 3 carries the phosphoserine modification. The segment covering 21–30 has biased composition (acidic residues); the sequence is EQQDAGEFQE. The chain crosses the membrane as a helical span at residues 172–193; the sequence is PARGIAIVSVLVILISIVIFCL. The Extracellular segment spans residues 194–262; that stretch reads ETLPQFRADG…TLGGSFFTDP (69 aa). Positions 203–238 are disordered; it reads GRGGSNEGSGTRLSPASRSHEEEDEDEDSYAFPGSI. The span at 210–219 shows a compositional bias: polar residues; it reads GSGTRLSPAS. The helical transmembrane segment at 263 to 284 threads the bilayer; the sequence is FFLVETLCIVWFTFELLVRFSA. A lipid anchor (S-palmitoyl cysteine) is attached at cysteine 285. Residues 285–295 lie on the Cytoplasmic side of the membrane; sequence CPSKAAFFRNI. The chain crosses the membrane as a helical span at residues 296–316; the sequence is MNIIDLVAIFPYFITLGTELV. At 317–337 the chain is on the extracellular side; it reads QRHEQQSVSGGSGQNGQQAMS. A helical; Voltage-sensor transmembrane segment spans residues 338 to 358; sequence LAILRVIRLVRVFRIFKLSRH. Over 359–373 the chain is Cytoplasmic; sequence SKGLQILGKTLQASM. The segment at 360–373 is S4-S5 linker; that stretch reads KGLQILGKTLQASM. A helical transmembrane segment spans residues 374–395; the sequence is RELGLLIFFLFIGVILFSSAVY. The Extracellular portion of the chain corresponds to 396–409; that stretch reads FAEADDVDSLFPSI. The segment at residues 410-421 is an intramembrane region (helical); sequence PDAFWWAVVTMT. Residues 422–427 carry the Selectivity filter motif; sequence TVGYGD. Residues 422-429 lie within the membrane without spanning it; that stretch reads TVGYGDMY. The Extracellular segment spans residues 430–436; it reads PMTVGGK. The helical transmembrane segment at 437–465 threads the bilayer; that stretch reads IVGSLCAIAGVLTIALPVPVIVSNFNYFY. Topologically, residues 466 to 529 are cytoplasmic; sequence HRETEQEEQG…YAEKRMLTEV (64 aa). Residues 488 to 513 form a disordered region; sequence DLKATDNGLGKPDFAEASRERRPSYL. Residues 500 to 510 show a composition bias toward basic and acidic residues; the sequence is DFAEASRERRP. The residue at position 511 (serine 511) is a Phosphoserine; by PKA. Positions 527-529 match the PDZ-binding motif; sequence TEV.

It belongs to the potassium channel family. A (Shaker) (TC 1.A.1.2) subfamily. Kv1.6/KCNA6 sub-subfamily. As to quaternary structure, homotetramer and heterotetramer of potassium channel proteins. Interacts with KCNAB1 and KCNAB2.

The protein resides in the cell membrane. The catalysed reaction is K(+)(in) = K(+)(out). In terms of biological role, voltage-gated potassium channel that mediates transmembrane potassium transport in excitable membranes. Forms tetrameric potassium-selective channels through which potassium ions pass in accordance with their electrochemical gradient. The channel alternates between opened and closed conformations in response to the voltage difference across the membrane. Can form functional homotetrameric channels and heterotetrameric channels that contain variable proportions of KCNA1, KCNA2, KCNA4, KCNA6, and possibly other family members as well; channel properties depend on the type of alpha subunits that are part of the channel. Channel properties are modulated by cytoplasmic beta subunits that regulate the subcellular location of the alpha subunits and promote rapid inactivation. Homotetrameric channels display rapid activation and slow inactivation. This chain is Potassium voltage-gated channel subfamily A member 6 (Kcna6), found in Mus musculus (Mouse).